Reading from the N-terminus, the 1073-residue chain is uncharacterized protein (1073 aa).

Positions 1-36 (MAEIIHHSNVFTWAFHVSEYDGAPLLLLGSFSSVAS) are cleaved as a signal peptide. The N-linked (GlcNAc...) asparagine glycan is linked to N132. 392–399 (ATAGIGKS) contributes to the ATP binding site. N544, N632, N703, N732, and N953 each carry an N-linked (GlcNAc...) asparagine glycan.

This is an uncharacterized protein from Schizosaccharomyces pombe (strain 972 / ATCC 24843) (Fission yeast).